Here is a 273-residue protein sequence, read N- to C-terminus: Nucleotide-binding protein TTHA0319 (273 aa).

Residue 8–15 (GLSGAGKT) participates in ATP binding. A GTP-binding site is contributed by 57–60 (DARA).

The protein belongs to the RapZ-like family.

Functionally, displays ATPase and GTPase activities. The chain is Nucleotide-binding protein TTHA0319 from Thermus thermophilus (strain ATCC 27634 / DSM 579 / HB8).